We begin with the raw amino-acid sequence, 517 residues long: L-amino-acid oxidase (517 aa).

An N-terminal signal peptide occupies residues 1–19; the sequence is MNVFSIFSLVFLAAFGSCA. Residues cysteine 29 and cysteine 192 are joined by a disulfide bond. Residues 62–63, 82–83, arginine 90, and 106–109 contribute to the FAD site; these read MA, EA, and GPMR. Residue arginine 109 coordinates substrate. An N-linked (GlcNAc...) asparagine glycan is attached at asparagine 191. Residue valine 280 participates in FAD binding. An intrachain disulfide couples cysteine 350 to cysteine 431. N-linked (GlcNAc...) asparagine glycosylation is present at asparagine 380. Tyrosine 391 provides a ligand contact to substrate. FAD-binding positions include glutamate 476 and 483-488; that span reads GWLDST. 483–484 is a substrate binding site; sequence GW.

This sequence belongs to the flavin monoamine oxidase family. FIG1 subfamily. As to quaternary structure, monomer. This is in contrast with most of its orthologs, that are non-covalently linked homodimers. FAD serves as cofactor. N-glycosylated. Expressed by the venom gland.

Its subcellular location is the secreted. It carries out the reaction an L-alpha-amino acid + O2 + H2O = a 2-oxocarboxylate + H2O2 + NH4(+). The catalysed reaction is L-leucine + O2 + H2O = 4-methyl-2-oxopentanoate + H2O2 + NH4(+). It catalyses the reaction L-phenylalanine + O2 + H2O = 3-phenylpyruvate + H2O2 + NH4(+). The enzyme catalyses L-tryptophan + O2 + H2O = indole-3-pyruvate + H2O2 + NH4(+). It carries out the reaction L-methionine + O2 + H2O = 4-methylsulfanyl-2-oxobutanoate + H2O2 + NH4(+). The catalysed reaction is L-isoleucine + O2 + H2O = (S)-3-methyl-2-oxopentanoate + H2O2 + NH4(+). It catalyses the reaction L-arginine + O2 + H2O = 5-guanidino-2-oxopentanoate + H2O2 + NH4(+). The enzyme catalyses L-aspartate + O2 + H2O = oxaloacetate + H2O2 + NH4(+). It carries out the reaction L-histidine + O2 + H2O = 3-(imidazol-5-yl)pyruvate + H2O2 + NH4(+). The catalysed reaction is L-asparagine + O2 + H2O = 2-oxosuccinamate + H2O2 + NH4(+). It catalyses the reaction L-tyrosine + O2 + H2O = 3-(4-hydroxyphenyl)pyruvate + H2O2 + NH4(+). The enzyme catalyses L-glutamine + O2 + H2O = 2-oxoglutaramate + H2O2 + NH4(+). It carries out the reaction L-alanine + O2 + H2O = pyruvate + H2O2 + NH4(+). The catalysed reaction is L-lysine + O2 + H2O = 6-amino-2-oxohexanoate + H2O2 + NH4(+). It catalyses the reaction L-glutamate + O2 + H2O = H2O2 + 2-oxoglutarate + NH4(+). Functionally, catalyzes an oxidative deamination of predominantly hydrophobic and aromatic L-amino acids, thus producing hydrogen peroxide that may contribute to the diverse toxic effects of this enzyme. Is highly active against L-Tyr, L-Asp, L-Phe, L-Glu, L-Trp, L-His, L-Gln, L-Ile, L-Met, L-Leu and moderately active against L-Lys, L-Arg, L-Ala and L-Asn. Exhibits diverse biological activities, such as edema, inflammatory cell infiltration, cytotoxicity and apoptosis, as well as induction of platelet aggregation. Effects of snake L-amino oxidases on platelets are controversial, since they either induce aggregation or inhibit agonist-induced aggregation. These different effects are probably due to different experimental conditions. This protein may also induce hemorrhage, hemolysis, and have antibacterial and antiparasitic activities. The sequence is that of L-amino-acid oxidase from Bungarus fasciatus (Banded krait).